The following is a 476-amino-acid chain: Eukaryotic translation initiation factor 3 subunit L (476 aa).

In terms of domain architecture, PCI spans 257-452 (DAIRMFSHIL…DLDYALEKDL (196 aa)).

This sequence belongs to the eIF-3 subunit L family. In terms of assembly, component of the eukaryotic translation initiation factor 3 (eIF-3) complex.

Its subcellular location is the cytoplasm. In terms of biological role, component of the eukaryotic translation initiation factor 3 (eIF-3) complex, which is involved in protein synthesis of a specialized repertoire of mRNAs and, together with other initiation factors, stimulates binding of mRNA and methionyl-tRNAi to the 40S ribosome. The eIF-3 complex specifically targets and initiates translation of a subset of mRNAs involved in cell proliferation. The polypeptide is Eukaryotic translation initiation factor 3 subunit L (Aspergillus terreus (strain NIH 2624 / FGSC A1156)).